Consider the following 193-residue polypeptide: FMN-dependent NADH:quinone oxidoreductase (193 aa).

Residues S9, 15 to 17 (SSS), and 137 to 140 (TSGG) each bind FMN.

This sequence belongs to the azoreductase type 1 family. As to quaternary structure, homodimer. FMN is required as a cofactor.

The catalysed reaction is 2 a quinone + NADH + H(+) = 2 a 1,4-benzosemiquinone + NAD(+). It catalyses the reaction N,N-dimethyl-1,4-phenylenediamine + anthranilate + 2 NAD(+) = 2-(4-dimethylaminophenyl)diazenylbenzoate + 2 NADH + 2 H(+). In terms of biological role, quinone reductase that provides resistance to thiol-specific stress caused by electrophilic quinones. Also exhibits azoreductase activity. Catalyzes the reductive cleavage of the azo bond in aromatic azo compounds to the corresponding amines. This Pelagibacter ubique (strain HTCC1062) protein is FMN-dependent NADH:quinone oxidoreductase.